A 467-amino-acid chain; its full sequence is Peptidoglycan-N-acetylmuramic acid deacetylase PdaC (467 aa).

The helical transmembrane segment at 6–26 (IKWFHVLIAVVCVVGLIGFFH) threads the bilayer. The NodB homology domain maps to 278–452 (KVIALTFDDG…KLTDQGYQLV (175 aa)). Residue aspartate 285 is the Proton acceptor of the active site. Aspartate 286, histidine 336, and histidine 340 together coordinate a divalent metal cation. Histidine 427 acts as the Proton donor in catalysis.

In the N-terminal section; belongs to the RsiV family. This sequence in the C-terminal section; belongs to the polysaccharide deacetylase family.

It localises to the cell membrane. Its activity is regulated as follows. Activated by divalent metal cations; Mn(2+) is the most efficient, followed by Ca(2+) and Mg(2+). In contrast to PgdA from S.pneumoniae, these ions are not absolutely required for deacetylase activity. In terms of biological role, catalyzes the deacetylation of N-acetylmuramic acid (MurNAc) residues in peptidoglycan, a modification that confers resistance to lysosyme. Is not able to deacetylate N-acetylglucosamine (GlcNAc) residues in peptidoglycan, but can deacylate chitin oligomers such as GlcNAc4 and GlcNAc5. Is essentially not active toward chitosan (partially deacetylated GlcNAc polymer) and has very low activity toward chitin (GlcNAc polymer). Does not deacetylate GlcNAc. This is Peptidoglycan-N-acetylmuramic acid deacetylase PdaC (pdaC) from Bacillus subtilis (strain 168).